Here is a 258-residue protein sequence, read N- to C-terminus: Alpha-fibrinogenase (258 aa).

The first 18 residues, 1 to 18, serve as a signal peptide directing secretion; it reads MVLIRVLANLVMLHLSYG. Residues 19–24 constitute a propeptide that is removed on maturation; that stretch reads EKSSEL. The region spanning 25-249 is the Peptidase S1 domain; it reads VIGGRPCNIN…YNDWIQSIIA (225 aa). 6 disulfides stabilise this stretch: cysteine 31–cysteine 163, cysteine 50–cysteine 66, cysteine 98–cysteine 256, cysteine 142–cysteine 210, cysteine 174–cysteine 189, and cysteine 200–cysteine 225. Residue asparagine 44 is glycosylated (N-linked (GlcNAc...) asparagine). The active-site Charge relay system is the histidine 65. 2 N-linked (GlcNAc...) asparagine glycosylation sites follow: asparagine 79 and asparagine 101. Aspartate 110 acts as the Charge relay system in catalysis. Serine 204 (charge relay system) is an active-site residue.

This sequence belongs to the peptidase S1 family. Snake venom subfamily. In terms of assembly, monomer. In terms of processing, glycosylated. Contains 8.5% of hexoses, 5.8% of hexosamines and 0.8% of sialic acids. In terms of tissue distribution, expressed by the venom gland.

Its subcellular location is the secreted. Its activity is regulated as follows. Inhibited by diisopropylfluorophosphate (DFP) and PMSF, and partially by soybean trypsin inhibitor, but not by EDTA. In terms of biological role, degrades alpha chain of fibrinogen (FGA), and has strong caseinolytic activity. Cleaves oxidized insulin B-chain at '40-Tyr-|-Leu-41', '48-Phe-|-Phe-49' and '49-Phe-|-Tyr-50', and glucagon at the bonds '62-Tyr-|-Ser-63', 66-Leu-|-Asp-67' and '78-Leu-|-Met-79' bonds. This chain is Alpha-fibrinogenase, found in Macrovipera lebetinus (Levantine viper).